A 252-amino-acid chain; its full sequence is Flagellar L-ring protein (252 aa).

Positions 1–25 (MLKLASLNRIVLTGTLLAAAGLASG) are cleaved as a signal peptide. Cys-26 is lipidated: N-palmitoyl cysteine. Cys-26 carries S-diacylglycerol cysteine lipidation.

The protein belongs to the FlgH family. As to quaternary structure, the basal body constitutes a major portion of the flagellar organelle and consists of four rings (L,P,S, and M) mounted on a central rod.

Its subcellular location is the cell outer membrane. The protein resides in the bacterial flagellum basal body. Assembles around the rod to form the L-ring and probably protects the motor/basal body from shearing forces during rotation. This is Flagellar L-ring protein from Nitrobacter winogradskyi (strain ATCC 25391 / DSM 10237 / CIP 104748 / NCIMB 11846 / Nb-255).